The sequence spans 328 residues: MSQQNILHYDMDVTSVSWVKDNTYQITIHVKAVKDIPLKYLWSLKIIGVNGPSSTVQLYGKNEKTYLISDPTDFTSTFQVYAYPSSDGCTVWMPNFQIQFEYLQGDAAQYWQTWQWGTTTFDLSTGCNNYDNQGHSQTDFPGFYWTYQCKGNNDGTCTKASSSSITTSSITTSSTTTSSTTTSSTTTSSSTTSSSTTSSSTTSSSTTSSSTTSSSTTSSSTTSSSTTSSSTTSSSTTSSSTTSSSTKTSTTTSSTVKSSSTTSIDFTTSVDSHTSSSVADIYRSRTSTDVTTLAASTSPFSSFTSSDSSSSSDVTSSTIQTTSVDPTT.

The region spanning 1–155 is the Flo11 domain; the sequence is MSQQNILHYD…TYQCKGNNDG (155 aa). Disordered stretches follow at residues 168 to 259 and 286 to 328; these read SSIT…VKSS and TSTD…DPTT. Low complexity predominate over residues 291–328; the sequence is TTLAASTSPFSSFTSSDSSSSSDVTSSTIQTTSVDPTT.

This is Bypass of stop codon protein 1 (BSC1) from Saccharomyces cerevisiae (strain ATCC 204508 / S288c) (Baker's yeast).